Consider the following 1005-residue polypeptide: PDZ domain-containing protein 7 (1005 aa).

PDZ domains are found at residues 86–168 and 210–293; these read SVRV…RMGR and IVHL…ETGR. Disordered regions lie at residues 353 to 378, 700 to 859, and 949 to 1005; these read PEEP…DAGG, VSPS…KTPS, and VRVP…ARLL. Residues 770–786 show a composition bias toward basic residues; that stretch reads AQSRSRSRSRSRSRSRS. A compositionally biased stretch (low complexity) spans 787–799; it reads SRGQGKSPGRRSP. Residues 989-998 are compositionally biased toward pro residues; that stretch reads PEPPTNPQTP.

Homodimerizes (via PDZ2 domain). Component of USH2 complex, composed of ADGRV1, PDZD7, USH2A and WHRN. Interacts (via PDZ domains) with WHRN; the interaction is direct. Interacts with USH1G. Interacts with ADGRV1 (via the cytoplasmic region). Interacts with USH2A (via the cytoplasmic region). Interacts with MYO7A (via MyTH4-FERM domains).

Its subcellular location is the cell projection. The protein localises to the cilium. The protein resides in the nucleus. It localises to the stereocilium. Functionally, in cochlear developing hair cells, essential in organizing the USH2 complex at stereocilia ankle links. Blocks inhibition of adenylate cyclase activity mediated by ADGRV1. The polypeptide is PDZ domain-containing protein 7 (PDZD7) (Pongo abelii (Sumatran orangutan)).